Consider the following 207-residue polypeptide: Small ribosomal subunit protein uS4 (207 aa).

Positions 31-40 (KCRLDNKPGQ) are enriched in basic and acidic residues. The segment at 31-56 (KCRLDNKPGQDGRTSGSRTSDYGNQL) is disordered. A compositionally biased stretch (polar residues) spans 42–53 (GRTSGSRTSDYG). One can recognise an S4 RNA-binding domain in the interval 97-158 (SRLDNVVYRM…KAKKQARITE (62 aa)).

This sequence belongs to the universal ribosomal protein uS4 family. Part of the 30S ribosomal subunit. Contacts protein S5. The interaction surface between S4 and S5 is involved in control of translational fidelity.

Functionally, one of the primary rRNA binding proteins, it binds directly to 16S rRNA where it nucleates assembly of the body of the 30S subunit. Its function is as follows. With S5 and S12 plays an important role in translational accuracy. The chain is Small ribosomal subunit protein uS4 from Polynucleobacter necessarius subsp. necessarius (strain STIR1).